The chain runs to 486 residues: Beta-barrel assembly-enhancing protease (486 aa).

The first 19 residues, Met1 to Ala19, serve as a signal peptide directing secretion. His134 is a binding site for Zn(2+). The active site involves Glu135. Residues His138 and Glu199 each contribute to the Zn(2+) site. The active-site Proton donor is Asp203.

The protein belongs to the peptidase M48 family. BepA subfamily. Requires Zn(2+) as cofactor.

It localises to the periplasm. Functions both as a chaperone and a metalloprotease. Maintains the integrity of the outer membrane by promoting either the assembly or the elimination of outer membrane proteins, depending on their folding state. The chain is Beta-barrel assembly-enhancing protease from Yersinia pestis.